We begin with the raw amino-acid sequence, 288 residues long: ATP synthase gamma chain (288 aa).

Belongs to the ATPase gamma chain family. As to quaternary structure, F-type ATPases have 2 components, CF(1) - the catalytic core - and CF(0) - the membrane proton channel. CF(1) has five subunits: alpha(3), beta(3), gamma(1), delta(1), epsilon(1). CF(0) has three main subunits: a, b and c.

It is found in the cell inner membrane. Produces ATP from ADP in the presence of a proton gradient across the membrane. The gamma chain is believed to be important in regulating ATPase activity and the flow of protons through the CF(0) complex. The chain is ATP synthase gamma chain from Blochmanniella pennsylvanica (strain BPEN).